A 291-amino-acid chain; its full sequence is Protease HtpX homolog (291 aa).

Transmembrane regions (helical) follow at residues 4-24 and 38-58; these read VFLF…SARL and LGML…ISLL. Residue H144 participates in Zn(2+) binding. E145 is an active-site residue. H148 is a binding site for Zn(2+). 2 helical membrane passes run 159-179 and 199-219; these read LIQG…AYAL and ISSI…VMYF. E224 contacts Zn(2+).

The protein belongs to the peptidase M48B family. Requires Zn(2+) as cofactor.

Its subcellular location is the cell inner membrane. The chain is Protease HtpX homolog from Chlorobium luteolum (strain DSM 273 / BCRC 81028 / 2530) (Pelodictyon luteolum).